Here is a 290-residue protein sequence, read N- to C-terminus: Agglutinin-2 (290 aa).

The N-terminal stretch at 1 to 35 is a signal peptide; it reads MAISNTNLLQTKKPISLPLLAFITLFLMLLNRVNS. Asparagine 155 carries N-linked (GlcNAc...) asparagine glycosylation. Glutamate 165 and aspartate 167 together coordinate Mn(2+). Ca(2+)-binding residues include aspartate 167, asparagine 171, and aspartate 175. 2 residues coordinate Mn(2+): aspartate 175 and histidine 180. Asparagine 200 is a glycosylation site (N-linked (GlcNAc...) asparagine).

It belongs to the leguminous lectin family. In terms of assembly, homotetramer.

Its function is as follows. Mannose/glucose binding bark lectin. Bark lectins are storage proteins that probably maintain stocks of nitrogen during dormant period. Self-aggregatable molecules that can bind their own carbohydrate side chains. They could also play a role in the plant's defense against phytophagous invertebrates or herbivorous higher animals. The polypeptide is Agglutinin-2 (Cladrastis kentukea (Yellow wood)).